Consider the following 238-residue polypeptide: Ribonuclease PH (238 aa).

Phosphate contacts are provided by residues R86 and 124–126; that span reads GTR.

It belongs to the RNase PH family. Homohexameric ring arranged as a trimer of dimers.

It catalyses the reaction tRNA(n+1) + phosphate = tRNA(n) + a ribonucleoside 5'-diphosphate. Its function is as follows. Phosphorolytic 3'-5' exoribonuclease that plays an important role in tRNA 3'-end maturation. Removes nucleotide residues following the 3'-CCA terminus of tRNAs; can also add nucleotides to the ends of RNA molecules by using nucleoside diphosphates as substrates, but this may not be physiologically important. Probably plays a role in initiation of 16S rRNA degradation (leading to ribosome degradation) during starvation. This Azorhizobium caulinodans (strain ATCC 43989 / DSM 5975 / JCM 20966 / LMG 6465 / NBRC 14845 / NCIMB 13405 / ORS 571) protein is Ribonuclease PH.